The primary structure comprises 173 residues: Photosystem I assembly protein Ycf3 (173 aa).

TPR repeat units lie at residues 35-68, 72-105, and 120-153; these read AFVY…EDDA, SYIL…NPNL, and GERA…APNN.

The protein belongs to the Ycf3 family.

It is found in the cellular thylakoid membrane. Essential for the assembly of the photosystem I (PSI) complex. May act as a chaperone-like factor to guide the assembly of the PSI subunits. The polypeptide is Photosystem I assembly protein Ycf3 (Gloeothece citriformis (strain PCC 7424) (Cyanothece sp. (strain PCC 7424))).